A 342-amino-acid chain; its full sequence is RNA 3'-terminal phosphate cyclase (342 aa).

Residues glutamine 102 and histidine 283 to glutamine 287 contribute to the ATP site. The active-site Tele-AMP-histidine intermediate is histidine 308.

Belongs to the RNA 3'-terminal cyclase family. Type 1 subfamily.

It localises to the cytoplasm. The catalysed reaction is a 3'-end 3'-phospho-ribonucleotide-RNA + ATP = a 3'-end 2',3'-cyclophospho-ribonucleotide-RNA + AMP + diphosphate. Functionally, catalyzes the conversion of 3'-phosphate to a 2',3'-cyclic phosphodiester at the end of RNA. The mechanism of action of the enzyme occurs in 3 steps: (A) adenylation of the enzyme by ATP; (B) transfer of adenylate to an RNA-N3'P to produce RNA-N3'PP5'A; (C) and attack of the adjacent 2'-hydroxyl on the 3'-phosphorus in the diester linkage to produce the cyclic end product. The biological role of this enzyme is unknown but it is likely to function in some aspects of cellular RNA processing. This chain is RNA 3'-terminal phosphate cyclase, found in Pseudomonas fluorescens (strain ATCC BAA-477 / NRRL B-23932 / Pf-5).